Consider the following 171-residue polypeptide: 3-hydroxydecanoyl-[acyl-carrier-protein] dehydratase (171 aa).

The active site involves histidine 69.

The protein belongs to the thioester dehydratase family. FabA subfamily. As to quaternary structure, homodimer.

It localises to the cytoplasm. The catalysed reaction is a (3R)-hydroxyacyl-[ACP] = a (2E)-enoyl-[ACP] + H2O. It catalyses the reaction (3R)-hydroxydecanoyl-[ACP] = (2E)-decenoyl-[ACP] + H2O. It carries out the reaction (2E)-decenoyl-[ACP] = (3Z)-decenoyl-[ACP]. The protein operates within lipid metabolism; fatty acid biosynthesis. Necessary for the introduction of cis unsaturation into fatty acids. Catalyzes the dehydration of (3R)-3-hydroxydecanoyl-ACP to E-(2)-decenoyl-ACP and then its isomerization to Z-(3)-decenoyl-ACP. Can catalyze the dehydratase reaction for beta-hydroxyacyl-ACPs with saturated chain lengths up to 16:0, being most active on intermediate chain length. The chain is 3-hydroxydecanoyl-[acyl-carrier-protein] dehydratase from Caulobacter sp. (strain K31).